Reading from the N-terminus, the 495-residue chain is Potassium voltage-gated channel subfamily A member 1 (495 aa).

Positions 1–30 (MTVMSGENVDEASAAPGHPQDGSYPRQADH) are disordered. A tetramerization domain region spans residues 1–128 (MTVMSGENVD…FYELGEEAME (128 aa)). Topologically, residues 1–164 (MTVMSGENVD…LLFEYPESSG (164 aa)) are cytoplasmic. Position 23 is a phosphoserine (serine 23). A helical membrane pass occupies residues 165 to 186 (PARVIAIVSVMVILISIVIFCL). Residues 187–220 (ETLPELKDDKDFTGTVHRIDNTTVIYNSNIFTDP) are Extracellular-facing. The N-linked (GlcNAc...) asparagine glycan is linked to asparagine 207. Residues 221 to 242 (FFIVETLCIIWFSFELVVRFFA) form a helical membrane-spanning segment. Cysteine 243 is lipidated: S-palmitoyl cysteine. At 243-253 (CPSKTDFFKNI) the chain is on the cytoplasmic side. The helical transmembrane segment at 254–274 (MNFIDIVAIIPYFITLGTEIA) threads the bilayer. Over 275–287 (EQEGNQKGEQATS) the chain is Extracellular. The helical; Voltage-sensor transmembrane segment at 288 to 308 (LAILRVIRLVRVFRIFKLSRH) threads the bilayer. Residues 309-323 (SKGLQILGQTLKASM) lie on the Cytoplasmic side of the membrane. Residues 310–323 (KGLQILGQTLKASM) are S4-S5 linker. Serine 322 bears the Phosphoserine; by PKA mark. A helical membrane pass occupies residues 324–345 (RELGLLIFFLFIGVILFSSAVY). Over 346–359 (FAEAEEAESHFSSI) the chain is Extracellular. Residues 360–371 (PDAFWWAVVSMT) constitute an intramembrane region (helical). The short motif at 372 to 377 (TVGYGD) is the Selectivity filter element. The stretch at 372–379 (TVGYGDMY) is an intramembrane region. Topologically, residues 380-386 (PVTIGGK) are extracellular. The helical transmembrane segment at 387-415 (IVGSLCAIAGVLTIALPVPVIVSNFNYFY) threads the bilayer. Residues 416–495 (HRETEGEEQA…VNKSKLLTDV (80 aa)) lie on the Cytoplasmic side of the membrane. 2 positions are modified to phosphoserine: serine 437 and serine 439. Position 446 is a phosphoserine; by PKA (serine 446). The PDZ-binding signature appears at 493 to 495 (TDV).

Belongs to the potassium channel family. A (Shaker) (TC 1.A.1.2) subfamily. Kv1.1/KCNA1 sub-subfamily. In terms of assembly, homotetramer and heterotetramer with other channel-forming alpha subunits, such as KCNA2, KCNA4, KCNA5, KCNA6 and KCNA7. Channel activity is regulated by interaction with the beta subunits KCNAB1 and KCNAB2. Identified in a complex with KCNA2 and KCNAB2. Interacts (via C-terminus) with the PDZ domains of DLG1, DLG2 and DLG4. Interacts with LGI1 within a complex containing LGI1, KCNA4 and KCNAB1. Interacts (via N-terminus) with STX1A; this promotes channel inactivation. Interacts (via N-terminus) with the heterodimer formed by GNB1 and GNG2; this promotes channel inactivation. Can interact simultaneously with STX1A and the heterodimer formed by GNB1 and GNG2. Interacts (via cytoplasmic N-terminal domain) with KCNRG; this inhibits channel activity. Interacts with ANK3; this inhibits channel activity. Interacts with ADAM11. N-glycosylated. Post-translationally, palmitoylated on Cys-243; which may be required for membrane targeting. In terms of processing, phosphorylated on tyrosine residues. Phosphorylation increases in response to NRG1; this inhibits channel activity. Phosphorylation at Ser-446 regulates channel activity by down-regulating expression at the cell membrane. Detected adjacent to nodes of Ranvier in juxtaparanodal zones in spinal cord nerve fibers, but also in paranodal regions in some myelinated spinal cord axons (at protein level). Detected in the islet of Langerhans.

The protein localises to the cell membrane. Its subcellular location is the membrane. The protein resides in the cell projection. It localises to the axon. It is found in the cytoplasmic vesicle. The protein localises to the perikaryon. Its subcellular location is the endoplasmic reticulum. The protein resides in the dendrite. It localises to the cell junction. It is found in the synapse. The protein localises to the presynaptic cell membrane. Its subcellular location is the presynapse. It carries out the reaction K(+)(in) = K(+)(out). Its activity is regulated as follows. Inhibited by 1.1 mM 4-aminopyridine (4-AP) and by 20 mM tetraethylammonium (TEA), but not by charybdotoxin (CTX). Inhibited by dendrotoxin (DTX). In terms of biological role, voltage-gated potassium channel that mediates transmembrane potassium transport in excitable membranes, primarily in the brain and the central nervous system, but also in the kidney. Contributes to the regulation of the membrane potential and nerve signaling, and prevents neuronal hyperexcitability. Forms tetrameric potassium-selective channels through which potassium ions pass in accordance with their electrochemical gradient. The channel alternates between opened and closed conformations in response to the voltage difference across the membrane. Can form functional homotetrameric channels and heterotetrameric channels that contain variable proportions of KCNA1, KCNA2, KCNA4, KCNA5, KCNA6, KCNA7, and possibly other family members as well; channel properties depend on the type of alpha subunits that are part of the channel. Channel properties are modulated by cytoplasmic beta subunits that regulate the subcellular location of the alpha subunits and promote rapid inactivation of delayed rectifier potassium channels. In vivo, membranes probably contain a mixture of heteromeric potassium channel complexes, making it difficult to assign currents observed in intact tissues to any particular potassium channel family member. Homotetrameric KCNA1 forms a delayed-rectifier potassium channel that opens in response to membrane depolarization, followed by slow spontaneous channel closure. In contrast, a heterotetrameric channel formed by KCNA1 and KCNA4 shows rapid inactivation. Regulates neuronal excitability in hippocampus, especially in mossy fibers and medial perforant path axons, preventing neuronal hyperexcitability. Response to toxins that are selective for KCNA1, respectively for KCNA2, suggests that heteromeric potassium channels composed of both KCNA1 and KCNA2 play a role in pacemaking and regulate the output of deep cerebellar nuclear neurons. May function as down-stream effector for G protein-coupled receptors and inhibit GABAergic inputs to basolateral amygdala neurons. May contribute to the regulation of neurotransmitter release, such as gamma-aminobutyric acid (GABA) release. Plays a role in regulating the generation of action potentials and preventing hyperexcitability in myelinated axons of the vagus nerve, and thereby contributes to the regulation of heart contraction. Required for normal neuromuscular responses. Regulates the frequency of neuronal action potential firing in response to mechanical stimuli, and plays a role in the perception of pain caused by mechanical stimuli, but does not play a role in the perception of pain due to heat stimuli. Required for normal responses to auditory stimuli and precise location of sound sources, but not for sound perception. The use of toxins that block specific channels suggest that it contributes to the regulation of the axonal release of the neurotransmitter dopamine. Required for normal postnatal brain development and normal proliferation of neuronal precursor cells in the brain. Plays a role in the reabsorption of Mg(2+) in the distal convoluted tubules in the kidney and in magnesium ion homeostasis, probably via its effect on the membrane potential. The polypeptide is Potassium voltage-gated channel subfamily A member 1 (Homo sapiens (Human)).